The chain runs to 241 residues: Small ribosomal subunit protein uS3 (241 aa).

The KH type-2 domain occupies 22–91 (VDEYLAYKFH…NPQVTVVKVE (70 aa)). The segment at 218–241 (EMQQTQPEAPTLEETVEQSGGETQ) is disordered.

Belongs to the universal ribosomal protein uS3 family. Part of the 30S ribosomal subunit.

In terms of biological role, binds the lower part of the 30S subunit head. This chain is Small ribosomal subunit protein uS3, found in Ignicoccus hospitalis (strain KIN4/I / DSM 18386 / JCM 14125).